The chain runs to 112 residues: Protein FAM32A (112 aa).

A disordered region spans residues 23–58 (TKRKKKKKDKDKAKLLEAMGTSKKNEEEKRRGLDKR). Basic and acidic residues predominate over residues 45 to 58 (KKNEEEKRRGLDKR).

Belongs to the FAM32 family.

It localises to the nucleus. Functionally, may induce G2 arrest and apoptosis. May also increase cell sensitivity to apoptotic stimuli. This chain is Protein FAM32A (FAM32A), found in Bos taurus (Bovine).